The chain runs to 612 residues: MSPLLEVTDLAVTFRTDGDPVTAVRGISYRVEPGEVVAMVGESGSGKSAAAMAVVGLLPEYAQVRGSVRLQGTELLGLADNAMSRFRGKAIGTVFQDPMSALTPVYTVGDQIAEAIEVHQPRVGKKAARRRAVELLDLVGISQPQRRSRAFPHELSGGERQRVVIAIAIANDPDLLICDEPTTALDVTVQAQILDVLKAARDVTGAGVLIITHDLGVVAEFADRALVMYAGRVVESAGVNDLYRDRRMPYTVGLLGSVPRLDAAQGTRLVPIPGAPPSLAGLAPGCPFAPRCPLVIDECLTAEPELLDVATDHRAACIRTELVTGRSAADIYRVKTEARPAALGDASVVVRVRHLVKTYRLAKGVVLRRAIGEVRAVDGISLELRQGRTLGIVGESGSGKSTTLHEILELAAPQSGSIEVLGTDVATLGTAERRSLRRDIQVVFQDPVASLDPRLPVFDLIAEPLQANGFGKNETHARVAELLDIVGLRHGDASRYPAEFSGGQKQRIGIARALALQPKILALDEPVSALDVSIQAGIINLLLDLQEQFGLSYLFVSHDLSVVKHLAHQVAVMLAGTVVEQGDSEEVFGNPKHEYTRRLLGAVPQPDPARRG.

Residues 5–255 (LEVTDLAVTF…RRMPYTVGLL (251 aa)) enclose the ABC transporter 1 domain. ATP-binding residues include Ser-43, Gly-44, Ser-45, Gly-46, Lys-47, Ser-48, Ala-49, Tyr-61, Gln-96, Arg-147, Gly-158, Glu-159, and His-213. The [4Fe-4S] cluster site is built by Cys-286, Cys-292, Cys-299, and Cys-317. The 251-residue stretch at 350–600 (VRVRHLVKTY…PKHEYTRRLL (251 aa)) folds into the ABC transporter 2 domain. Residues Ser-396, Gly-397, Ser-398, Gly-399, Lys-400, Ser-401, Thr-402, Gln-445, Arg-495, Glu-499, Gly-503, and His-558 each contribute to the ATP site.

It belongs to the ABC transporter superfamily. The complex is composed of an ATP-binding protein (OppD), two transmembrane proteins (OppB and OppC) and a solute-binding protein (OppA).

It localises to the cell inner membrane. The enzyme catalyses a [peptide](out) + ATP + H2O = a [peptide](in) + ADP + phosphate + H(+). Its function is as follows. Part of the ABC transporter complex OppABCD involved in the uptake of oligopeptides. Responsible for energy coupling to the transport system. This is Oligopeptide transport ATP-binding protein OppD from Mycobacterium bovis (strain ATCC BAA-935 / AF2122/97).